Consider the following 815-residue polypeptide: uncharacterized protein (815 aa).

The first 25 residues, 1 to 25 (MVVMKKKRILIVSAIVLLFLTVASA), serve as a signal peptide directing secretion. 6 consecutive transmembrane segments (helical) span residues 127–147 (FGEALFIFTCAYVVYLFCVRG), 157–177 (ILFICVMVIGGLWMSNAGYYM), 311–331 (SFIAVVASIVIGIPFLALAFF), 333–353 (FLLQVVALVIVFFVPFAFILA), 372–392 (VYLLKAMLGVIVLFVYVTCFI), and 401–421 (GFGMYLLNVAVLASILWIGFH). The tract at residues 483–815 (KDGSNADGVT…DRLRRDERTR (333 aa)) is disordered. The span at 513–543 (HAISRTPQKETANGIANHNSRSLKRNPQTLS) shows a compositional bias: polar residues. Composition is skewed to basic and acidic residues over residues 544-563 (KEQEKQKQKEAFANAKENKQ) and 599-614 (QDKKDESARTDQKEYV). Over residues 619–630 (KQPNNQQQTDDA) the composition is skewed to polar residues. Positions 648–658 (ENEKDTERTDQ) are enriched in basic and acidic residues. Residues 665-678 (EQNQNLETDQQQDF) are compositionally biased toward polar residues. Residues 696–705 (KTAEIKRSDQ) are compositionally biased toward basic and acidic residues. Residues 720-732 (SPQSTKVENQPIA) show a composition bias toward polar residues. A compositionally biased stretch (basic and acidic residues) spans 734-757 (NERKIRPSEPAKVHSDGIRVDEKQ). Positions 773–793 (PSSQTIKRTEQSVNSFDQVSL) are enriched in polar residues. Over residues 796 to 815 (IARRSSSKVEDRLRRDERTR) the composition is skewed to basic and acidic residues.

The protein localises to the cell membrane. This is an uncharacterized protein from Bacillus subtilis (strain 168).